The primary structure comprises 447 residues: Alpha-1,3-mannosyl-glycoprotein 2-beta-N-acetylglucosaminyltransferase (447 aa).

Over 1-6 (MLKKQS) the chain is Cytoplasmic. A helical; Signal-anchor for type II membrane protein transmembrane segment spans residues 7–29 (AGLVLWGAIIFVGWNALLLLFFW). Over 30 to 447 (TRPAPGRLPS…TWNGYDPSWN (418 aa)) the chain is Lumenal. Cys115 and Cys145 are disulfide-bonded. Substrate-binding residues include Arg117, Asp144, His190, and Asp212. Asp213 is a Mn(2+) binding site. Cys239 and Cys305 are oxidised to a cystine. Catalysis depends on Asp291, which acts as the Proton acceptor. Ser322 provides a ligand contact to substrate.

It belongs to the glycosyltransferase 13 family. In terms of assembly, interacts with MGAT4D. Interacts with BRI3. It depends on Mn(2+) as a cofactor. As to expression, appears to be present in all tissues.

The protein resides in the golgi apparatus membrane. It localises to the cytoplasm. The protein localises to the perinuclear region. It catalyses the reaction N(4)-(alpha-D-Man-(1-&gt;3)-[alpha-D-Man-(1-&gt;3)-[alpha-D-Man-(1-&gt;6)]-alpha-D-Man-(1-&gt;6)]-beta-D-Man-(1-&gt;4)-beta-D-GlcNAc-(1-&gt;4)-beta-D-GlcNAc)-L-asparaginyl-[protein] (N-glucan mannose isomer 5A1,2) + UDP-N-acetyl-alpha-D-glucosamine = N(4)-{beta-D-GlcNAc-(1-&gt;2)-alpha-D-Man-(1-&gt;3)-[alpha-D-Man-(1-&gt;3)-[alpha-D-Man-(1-&gt;6)]-alpha-D-Man-(1-&gt;6)]-beta-D-Man-(1-&gt;4)-beta-D-GlcNAc-(1-&gt;4)-beta-D-GlcNAc}-L-asparaginyl-[protein] + UDP + H(+). The protein operates within protein modification; protein glycosylation. In terms of biological role, initiates complex N-linked carbohydrate formation. Essential for the conversion of high-mannose to hybrid and complex N-glycans. The protein is Alpha-1,3-mannosyl-glycoprotein 2-beta-N-acetylglucosaminyltransferase (Mgat1) of Rattus norvegicus (Rat).